A 161-amino-acid chain; its full sequence is Small ribosomal subunit protein bS16 (161 aa).

A disordered region spans residues 114–161; the sequence is EGGPTTEATKPKKKSPAKKAKGGEGDADAAAEKVEASAEGEQTESAES. Basic residues predominate over residues 124–133; it reads PKKKSPAKKA.

The protein belongs to the bacterial ribosomal protein bS16 family.

The polypeptide is Small ribosomal subunit protein bS16 (Mycobacterium marinum (strain ATCC BAA-535 / M)).